Reading from the N-terminus, the 484-residue chain is MLFKGVFAVFFVITLLYASLLIEVEGIGVNWGSQARHPLPPATVVRLLRENGIQKVKLFEADSAILKALSRTGIQVMVGIPNDLLAPLAGSVAAAERWVSQNVSAHVSSNGVDIRYVAVGNEPFLKAFNGTFEGITLPALQNIQSAIIKAGLATQVKVTVPLNADVYQSASNLPSDGDFRPEIRDLMLNIVKFLSDNGAPFTINIYPFISLYNDPNFPVEFAFFDGTGTPINDNGRIYDNVLDANYDTLVWSLQKNGFGNLTIIVGEVGWPTDGDKNANLMYARRYNQGFMNRQKANKGTPMRPGAMDAYLFGLIDEDAKSIQPGNFERHWGIFYIDGQPKYQLSLGSGNGLIPAKDVHYLAKKWCILAPNANLQDPQLGPSVSYACDHADCTSLGYGSSCGNLNLAQNVSYAFNSYYQVSNQLDSACKFPGLSIVSTRDPSVGSCKFKIMIKSEDASEASAMMPITRSTAVLLLLSICLYIVL.

The N-terminal stretch at 1 to 26 (MLFKGVFAVFFVITLLYASLLIEVEG) is a signal peptide. An N-linked (GlcNAc...) asparagine glycan is attached at N102. E122 acts as the Proton donor in catalysis. N129 and N260 each carry an N-linked (GlcNAc...) asparagine glycan. E267 acts as the Nucleophile in catalysis. A disulfide bridge connects residues C366 and C428. Residue N409 is glycosylated (N-linked (GlcNAc...) asparagine). A460 is lipidated: GPI-anchor amidated alanine. Residues 461-484 (SAMMPITRSTAVLLLLSICLYIVL) constitute a propeptide, removed in mature form.

Belongs to the glycosyl hydrolase 17 family. In terms of processing, contains two additional disulfide bonds.

The protein resides in the cell membrane. It carries out the reaction Hydrolysis of (1-&gt;3)-beta-D-glucosidic linkages in (1-&gt;3)-beta-D-glucans.. In Arabidopsis thaliana (Mouse-ear cress), this protein is Glucan endo-1,3-beta-glucosidase 5.